The following is a 186-amino-acid chain: ATP synthase subunit delta, chloroplastic (186 aa).

It belongs to the ATPase delta chain family. As to quaternary structure, F-type ATPases have 2 components, F(1) - the catalytic core - and F(0) - the membrane proton channel. F(1) has five subunits: alpha(3), beta(3), gamma(1), delta(1), epsilon(1). CF(0) has four main subunits: a(1), b(1), b'(1) and c(10-14). The alpha and beta chains form an alternating ring which encloses part of the gamma chain. F(1) is attached to F(0) by a central stalk formed by the gamma and epsilon chains, while a peripheral stalk is formed by the delta, b and b' chains.

The protein localises to the plastid. It localises to the chloroplast thylakoid membrane. F(1)F(0) ATP synthase produces ATP from ADP in the presence of a proton or sodium gradient. F-type ATPases consist of two structural domains, F(1) containing the extramembraneous catalytic core and F(0) containing the membrane proton channel, linked together by a central stalk and a peripheral stalk. During catalysis, ATP synthesis in the catalytic domain of F(1) is coupled via a rotary mechanism of the central stalk subunits to proton translocation. In terms of biological role, this protein is part of the stalk that links CF(0) to CF(1). It either transmits conformational changes from CF(0) to CF(1) or is implicated in proton conduction. The protein is ATP synthase subunit delta, chloroplastic of Pyropia yezoensis (Susabi-nori).